The primary structure comprises 402 residues: S-adenosylmethionine synthase (402 aa).

140-145 is an ATP binding site; that stretch reads GNGSID.

This sequence belongs to the AdoMet synthase 2 family. It depends on Mg(2+) as a cofactor.

The enzyme catalyses L-methionine + ATP + H2O = S-adenosyl-L-methionine + phosphate + diphosphate. It participates in amino-acid biosynthesis; S-adenosyl-L-methionine biosynthesis; S-adenosyl-L-methionine from L-methionine: step 1/1. Catalyzes the formation of S-adenosylmethionine from methionine and ATP. The protein is S-adenosylmethionine synthase of Picrophilus torridus (strain ATCC 700027 / DSM 9790 / JCM 10055 / NBRC 100828 / KAW 2/3).